A 763-amino-acid chain; its full sequence is Phosphoglycerol transferase I (763 aa).

4 helical membrane passes run 1–21, 26–46, 77–97, and 108–128; these read MSEL…AWKA, WWFA…ITLF, ILPG…LGWI, and FGYS…SPAF.

It belongs to the OpgB family.

The protein localises to the cell inner membrane. The catalysed reaction is a phosphatidylglycerol + a membrane-derived-oligosaccharide D-glucose = a 1,2-diacyl-sn-glycerol + a membrane-derived-oligosaccharide 6-(glycerophospho)-D-glucose.. It participates in glycan metabolism; osmoregulated periplasmic glucan (OPG) biosynthesis. Its function is as follows. Transfers a phosphoglycerol residue from phosphatidylglycerol to the membrane-bound nascent glucan backbones. This chain is Phosphoglycerol transferase I, found in Escherichia coli (strain SE11).